Here is a 571-residue protein sequence, read N- to C-terminus: E3 ubiquitin-protein ligase ipaH3 (571 aa).

Residues 1-260 are interaction with target proteins; it reads MSIMLPINNN…SQQTAQPDYH (260 aa). 9 LRR repeats span residues 58-81, 83-99, 100-119, 120-144, 146-159, 160-184, 186-202, 205-229, and 232-260; these read INQF…LPPQ, TVLE…PELP, ASLE…PELP, ASLK…LLEY, NADN…PELP, TSLE…SLEA, DVST…PVRN, SEET…ILSL, and TCTI…PDYH. The segment at 269-278 is linker; the sequence is SDGQQNTLHR. One can recognise an NEL domain in the interval 279–571; that stretch reads PLADAVTAWF…SENGSQLHHS (293 aa). The E3 ubiquitin-protein ligase catalytic domain stretch occupies residues 279-571; that stretch reads PLADAVTAWF…SENGSQLHHS (293 aa). The active-site Glycyl thioester intermediate is the C363.

Belongs to the LRR-containing bacterial E3 ligase family. In terms of processing, ubiquitinated in the presence of host E1 ubiquitin-activating enzyme, E2 ubiquitin-conjugating enzyme UBE2D3 and ubiquitin.

The protein resides in the secreted. The protein localises to the host cytoplasm. It catalyses the reaction S-ubiquitinyl-[E2 ubiquitin-conjugating enzyme]-L-cysteine + [acceptor protein]-L-lysine = [E2 ubiquitin-conjugating enzyme]-L-cysteine + N(6)-ubiquitinyl-[acceptor protein]-L-lysine.. Functionally, effector proteins function to alter host cell physiology and promote bacterial survival in host tissues. This protein is an E3 ubiquitin ligase that interferes with host's ubiquitination pathway. Synthesizes a 'Lys-48'-linked ubiquitin chain, which requires non-covalent binding between ubiquitin and the host ubiquitin-conjugating enzyme UBE2D1. This is E3 ubiquitin-protein ligase ipaH3 (ipaH3) from Shigella flexneri.